The sequence spans 381 residues: cAMP-dependent protein kinase type I-beta regulatory subunit (381 aa).

A dimerization and phosphorylation region spans residues 1 to 136 (MASPSCFHSE…ALAKAISKNV (136 aa)). Ser-3 carries the post-translational modification Phosphoserine. A 3'-nitrotyrosine modification is found at Tyr-21. Residues 66–88 (LARQKSNSQCDSHDEEISPTPPN) are disordered. 2 positions are modified to phosphoserine: Ser-77 and Ser-83. Thr-85 bears the Phosphothreonine mark. Residues 96–100 (RRGGV) carry the Pseudophosphorylation motif motif. Arg-97 carries the post-translational modification Omega-N-methylarginine. 3',5'-cyclic AMP contacts are provided by residues 137–254 (LFSH…SKVS), Glu-202, Arg-211, 255–381 (ILES…SLTV), Glu-326, and Arg-335.

Belongs to the cAMP-dependent kinase regulatory chain family. The inactive holoenzyme is composed of two regulatory chains and two catalytic chains. Activation by cAMP releases the two active catalytic monomers and the regulatory dimer. Interacts with PRKX; regulates this cAMP-dependent protein kinase. Interacts with smAKAP; this interaction may target PRKAR1B to the plasma membrane. Post-translationally, the pseudophosphorylation site binds to the substrate-binding region of the catalytic chain, resulting in the inhibition of its activity. In terms of tissue distribution, four types of regulatory chains are found: I-alpha, I-beta, II-alpha, and II-beta. Their expression varies among tissues and is in some cases constitutive and in others inducible.

Its subcellular location is the cell membrane. Its function is as follows. Regulatory subunit of the cAMP-dependent protein kinases involved in cAMP signaling in cells. This chain is cAMP-dependent protein kinase type I-beta regulatory subunit (Prkar1b), found in Mus musculus (Mouse).